The primary structure comprises 165 residues: Large ribosomal subunit protein uL10 (165 aa).

It belongs to the universal ribosomal protein uL10 family. As to quaternary structure, part of the ribosomal stalk of the 50S ribosomal subunit. The N-terminus interacts with L11 and the large rRNA to form the base of the stalk. The C-terminus forms an elongated spine to which L12 dimers bind in a sequential fashion forming a multimeric L10(L12)X complex.

Its function is as follows. Forms part of the ribosomal stalk, playing a central role in the interaction of the ribosome with GTP-bound translation factors. This Burkholderia mallei (strain NCTC 10229) protein is Large ribosomal subunit protein uL10.